The sequence spans 207 residues: N-(5'-phosphoribosyl)anthranilate isomerase (207 aa).

It belongs to the TrpF family.

It carries out the reaction N-(5-phospho-beta-D-ribosyl)anthranilate = 1-(2-carboxyphenylamino)-1-deoxy-D-ribulose 5-phosphate. The protein operates within amino-acid biosynthesis; L-tryptophan biosynthesis; L-tryptophan from chorismate: step 3/5. The polypeptide is N-(5'-phosphoribosyl)anthranilate isomerase (Geotalea daltonii (strain DSM 22248 / JCM 15807 / FRC-32) (Geobacter daltonii)).